Here is a 164-residue protein sequence, read N- to C-terminus: CASP-like protein 1C1 (164 aa).

The Cytoplasmic portion of the chain corresponds to Met-1–Arg-7. Residues Ile-8–Met-28 traverse the membrane as a helical segment. The Extracellular portion of the chain corresponds to Ile-29 to Ala-51. The helical transmembrane segment at Phe-52–Leu-72 threads the bilayer. The Cytoplasmic portion of the chain corresponds to Pro-73–Lys-80. Residues Phe-81–Leu-101 form a helical membrane-spanning segment. Topologically, residues Ala-102–Gln-129 are extracellular. Residues Ile-130–Tyr-150 form a helical membrane-spanning segment. The Cytoplasmic segment spans residues Ser-151–Ser-164.

This sequence belongs to the Casparian strip membrane proteins (CASP) family. As to quaternary structure, homodimer and heterodimers. As to expression, expressed in the stele of the root.

Its subcellular location is the cell membrane. This Arabidopsis thaliana (Mouse-ear cress) protein is CASP-like protein 1C1.